The following is a 145-amino-acid chain: Ribonuclease VapC7 (145 aa).

The PINc domain occupies 2 to 129 (IVLDTTVLVY…PAFADLSDVV (128 aa)). Asp5 and Asp100 together coordinate Mg(2+).

The protein belongs to the PINc/VapC protein family. Requires Mg(2+) as cofactor.

In terms of biological role, toxic component of a type II toxin-antitoxin (TA) system. An RNase. The cognate antitoxin is VapB7. This Mycobacterium tuberculosis (strain ATCC 25618 / H37Rv) protein is Ribonuclease VapC7.